The primary structure comprises 122 residues: Ribosome-binding factor A (122 aa).

This sequence belongs to the RbfA family. Monomer. Binds 30S ribosomal subunits, but not 50S ribosomal subunits or 70S ribosomes.

The protein localises to the cytoplasm. One of several proteins that assist in the late maturation steps of the functional core of the 30S ribosomal subunit. Associates with free 30S ribosomal subunits (but not with 30S subunits that are part of 70S ribosomes or polysomes). Required for efficient processing of 16S rRNA. May interact with the 5'-terminal helix region of 16S rRNA. This is Ribosome-binding factor A from Polaromonas naphthalenivorans (strain CJ2).